The following is a 176-amino-acid chain: Ribosome maturation factor RimM (176 aa).

One can recognise a PRC barrel domain in the interval 101-174; the sequence is EGHYYIYQLL…EIRVELPPGL (74 aa).

The protein belongs to the RimM family. In terms of assembly, binds ribosomal protein uS19.

It is found in the cytoplasm. Functionally, an accessory protein needed during the final step in the assembly of 30S ribosomal subunit, possibly for assembly of the head region. Essential for efficient processing of 16S rRNA. May be needed both before and after RbfA during the maturation of 16S rRNA. It has affinity for free ribosomal 30S subunits but not for 70S ribosomes. This chain is Ribosome maturation factor RimM, found in Moorella thermoacetica (strain ATCC 39073 / JCM 9320).